A 208-amino-acid chain; its full sequence is Small ribosomal subunit protein uS3 (208 aa).

The region spanning 17–86 (IDEYLEKELR…NPQIEVEEIK (70 aa)) is the KH type-2 domain.

This sequence belongs to the universal ribosomal protein uS3 family. Part of the 30S ribosomal subunit.

In terms of biological role, binds the lower part of the 30S subunit head. This Thermococcus onnurineus (strain NA1) protein is Small ribosomal subunit protein uS3.